Here is a 398-residue protein sequence, read N- to C-terminus: 8-amino-7-oxononanoate synthase (398 aa).

R26 provides a ligand contact to substrate. Pyridoxal 5'-phosphate is bound at residue 113–114 (GF). H138 serves as a coordination point for substrate. The pyridoxal 5'-phosphate site is built by S181, H209, and T238. K241 carries the N6-(pyridoxal phosphate)lysine modification. Residue T355 participates in substrate binding.

Belongs to the class-II pyridoxal-phosphate-dependent aminotransferase family. BioF subfamily. As to quaternary structure, homodimer. Requires pyridoxal 5'-phosphate as cofactor.

The enzyme catalyses 6-carboxyhexanoyl-[ACP] + L-alanine + H(+) = (8S)-8-amino-7-oxononanoate + holo-[ACP] + CO2. The protein operates within cofactor biosynthesis; biotin biosynthesis. In terms of biological role, catalyzes the decarboxylative condensation of pimeloyl-[acyl-carrier protein] and L-alanine to produce 8-amino-7-oxononanoate (AON), [acyl-carrier protein], and carbon dioxide. In Aeromonas hydrophila subsp. hydrophila (strain ATCC 7966 / DSM 30187 / BCRC 13018 / CCUG 14551 / JCM 1027 / KCTC 2358 / NCIMB 9240 / NCTC 8049), this protein is 8-amino-7-oxononanoate synthase.